The sequence spans 2648 residues: E3 ubiquitin-protein ligase hecd-1 (2648 aa).

2 ANK repeats span residues 374 to 403 (VGQS…DVNK) and 405 to 434 (HKSS…NPDL). Positions 433–455 (DLRDEDGKTALDKARERSDDDHN) are enriched in basic and acidic residues. Disordered regions lie at residues 433–494 (DLRD…ELPN), 645–714 (PMEI…KATA), and 1376–1400 (DPPK…ALPP). Composition is skewed to polar residues over residues 478-489 (ASTSKQPGTSTK), 652-661 (NQPSSSTAVP), and 670-688 (TVPS…NPST). 2 stretches are compositionally biased toward low complexity: residues 696–714 (SSTP…KATA) and 1383–1400 (PAGT…ALPP). Residues 1438–1510 (RSRGSYKISE…NFDIERVTST (73 aa)) enclose the MIB/HERC2 domain. Disordered stretches follow at residues 1538–1562 (YTPK…GSSR), 1575–1629 (KNTT…SLQH), 1652–1796 (NQEP…LLGG), and 1811–1836 (ESLS…GKKP). Low complexity-rich tracts occupy residues 1543–1562 (TGGP…GSSR) and 1575–1586 (KNTTPAGTPSSG). Over residues 1610 to 1629 (TSGPSVASTGQAASAESLQH) the composition is skewed to polar residues. The span at 1653–1666 (QEPEDEPMGGEESD) shows a compositional bias: acidic residues. The segment covering 1667–1696 (SAASMRSAASSNSQMSMGSSSQQQQQQDSD) has biased composition (low complexity). 2 stretches are compositionally biased toward acidic residues: residues 1736 to 1746 (TDGDADADETN) and 1756 to 1783 (DAME…DESS). A compositionally biased stretch (low complexity) spans 1812-1823 (SLSDASSSAKDA). Positions 2240 to 2648 (FHADRKAVLE…AINEKGFHLN (409 aa)) constitute an HECT domain. Cysteine 2617 functions as the Glycyl thioester intermediate in the catalytic mechanism.

The protein belongs to the UPL family. K-HECT subfamily. In terms of tissue distribution, expressed in most tissues, including hypodermis, muscle, intestine, vulva, and neurons.

The catalysed reaction is S-ubiquitinyl-[E2 ubiquitin-conjugating enzyme]-L-cysteine + [acceptor protein]-L-lysine = [E2 ubiquitin-conjugating enzyme]-L-cysteine + N(6)-ubiquitinyl-[acceptor protein]-L-lysine.. The protein operates within protein modification; protein ubiquitination. Functionally, E3 ubiquitin-protein ligase which accepts ubiquitin from an E2 ubiquitin-conjugating enzyme in the form of a thioester and then directly transfers the ubiquitin to targeted substrates. Involved in the ubiquitination and proteasomal-mediated degradation of cytoplasmic and mitochondrial proteins. Positively regulates lin-12 activity in the anchor cell (AC)/vulval precursor (VU) cell fate decision. Negatively regulates glp-1 activity in germline proliferation. May play a role in the formation of fibrous organelles, a hemidesmosome-like structure attaching muscles to the epidermis. Regulates germline DNA double-strand-break repair and apoptosis in response to DNA damage by recruiting E4 ubiquitin-protein ligase ufd-2 to DNA repair foci. This Caenorhabditis elegans protein is E3 ubiquitin-protein ligase hecd-1.